Here is a 452-residue protein sequence, read N- to C-terminus: uncharacterized protein (452 aa).

This is an uncharacterized protein from Acanthamoeba polyphaga (Amoeba).